Here is a 478-residue protein sequence, read N- to C-terminus: Proline--tRNA ligase (478 aa).

Belongs to the class-II aminoacyl-tRNA synthetase family. ProS type 3 subfamily. In terms of assembly, homodimer.

The protein resides in the cytoplasm. The enzyme catalyses tRNA(Pro) + L-proline + ATP = L-prolyl-tRNA(Pro) + AMP + diphosphate. In terms of biological role, catalyzes the attachment of proline to tRNA(Pro) in a two-step reaction: proline is first activated by ATP to form Pro-AMP and then transferred to the acceptor end of tRNA(Pro). The protein is Proline--tRNA ligase of Clostridium botulinum (strain Loch Maree / Type A3).